Consider the following 185-residue polypeptide: Elongation factor P (185 aa).

The protein belongs to the elongation factor P family.

The protein localises to the cytoplasm. The protein operates within protein biosynthesis; polypeptide chain elongation. Functionally, involved in peptide bond synthesis. Stimulates efficient translation and peptide-bond synthesis on native or reconstituted 70S ribosomes in vitro. Probably functions indirectly by altering the affinity of the ribosome for aminoacyl-tRNA, thus increasing their reactivity as acceptors for peptidyl transferase. In Bacillus anthracis (strain CDC 684 / NRRL 3495), this protein is Elongation factor P.